The chain runs to 250 residues: Vacuolar iron transporter 1 (250 aa).

The Cytoplasmic segment spans residues 1-37 (MSSEEDKITRISIEPEKQTLLDHHTEKHFTAGEIVRD). The helical transmembrane segment at 38–58 (IIIGVSDGLTVPFALAAGLSG) threads the bilayer. Residues 59 to 64 (ANASSS) are Vacuolar-facing. A helical membrane pass occupies residues 65-85 (IVLTAGIAEVAAGAISMGLGG). At 86–169 (YLAAKSEEDH…PDPKRALQSA (84 aa)) the chain is on the cytoplasmic side. Positions 91-166 (SEEDHYAREM…LEKPDPKRAL (76 aa)) are cytoplasmic metal binding domain (MBD). E103, E106, E114, E117, M150, and E154 together coordinate Fe cation. A helical transmembrane segment spans residues 170-190 (FTIAIAYVLGGFIPLLPYMLI). The Vacuolar portion of the chain corresponds to 191–192 (PH). A helical transmembrane segment spans residues 193 to 213 (AMDAVVASVVITLFALFIFGY). Residues 214–227 (AKGHFTGSKPLRSA) are Cytoplasmic-facing. A helical transmembrane segment spans residues 228–248 (FETAFIGAIASAAAFCLAKVV). The Vacuolar segment spans residues 249–250 (QH).

It belongs to the CCC1 family. Homodimer. The dimeric interaction is mediated by both the transmembrane domains (TMDs) and the cytoplasmic metal binding domain (MBD). Highly expressed in developing embryo and seed. Expressed in young seedlings, predominantly in the vasculature.

It is found in the vacuole membrane. The catalysed reaction is Fe(2+)(in) = Fe(2+)(out). Vacuolar iron transporter involved in the transfer of iron ions from the cytosol to the vacuole for intracellular iron storage. Involved in regulation of cellular iron homeostasis. Vacuolar iron storage is required for seed embryo and seedling development. The polypeptide is Vacuolar iron transporter 1 (Arabidopsis thaliana (Mouse-ear cress)).